The primary structure comprises 1113 residues: Period circadian protein homolog 3 (1113 aa).

Residues 1–48 form a disordered region; sequence MDPCGDPAVPGGDCPQTRGPGLQGASGQEGPLQGTCVDSSHSEHEDRN. A Nuclear export signal 1 motif is present at residues 54 to 63; it reads LIMVVQEMKK. PAS domains are found at residues 120–187 and 258–324; these read LASE…PTQL and YEAP…KVLK. A PAC domain is found at 333–376; it reads HSPVRFCTQNGEYVILDSSWSSFVNPWSRKVSFIIGRHKVRTSP. The Nuclear export signal 3 signature appears at 399–408; that stretch reads LQEQIHKLLL. Low complexity predominate over residues 418-427; the sequence is GYGSLGSSGS. Disordered stretches follow at residues 418–451, 485–530, 561–580, 718–742, and 871–906; these read GYGS…GQHE, VAET…SSSY, TSSS…SQRD, HSRC…DTSS, and LVPA…PFIS. Composition is skewed to polar residues over residues 428 to 441 and 501 to 530; these read QEQH…SESS and FSSS…SSSY. A CSNK1E binding domain region spans residues 551-750; sequence LKRKCISCTN…SSPGAHLCPH (200 aa). Residues 566 to 580 are compositionally biased toward basic and acidic residues; that stretch reads EEAKPIPEVDSSQRD. A Nuclear localization signal motif is present at residues 719-735; sequence SRCAGSERQKHKRKKLP. Positions 889–901 are enriched in basic and acidic residues; sequence RRVEENWEAHSEE. Phosphoserine is present on Ser-907. Residues 913–920 carry the Nuclear export signal 2 motif; the sequence is LQLNLLQE. The segment at 921–1010 is disordered; it reads EMPAPSESAD…DRQRDEALPG (90 aa). Residues 962–986 are compositionally biased toward low complexity; it reads ATATAQQESAAASGSSASSIYFSST. Basic and acidic residues predominate over residues 993-1007; that stretch reads SENRQRPQDRQRDEA. A CRY binding domain region spans residues 1035 to 1113; it reads ERGREEVLKQ…LEQHPAEDTS (79 aa).

Homodimer. Component of the circadian core oscillator, which includes the CRY proteins, CLOCK or NPAS2, BMAL1 or BMAL2, CSNK1D and/or CSNK1E, TIMELESS and the PER proteins. Interacts directly with PER1, PER2, CRY1, CRY2, and TIMELESS; interaction with CRY1 and CRY2 is weak and not rhythmic. Interacts with FBXW11 and BTRC. In terms of processing, phosphorylation by CSNK1E is weak and appears to require association with PER1 and translocation to the nucleus. Post-translationally, ubiquitinated. As to expression, widely expressed. Expressed in heart, brain, lung, liver, skeletal muscle, testis, and at low level in the spleen and kidney. In brain, mainly found in the SCN, hippocampus, piriform cortex, and cerebellum. Lower level of expression in the neocortex. Expression exhibits synchronous oscillations in liver, skeletal muscle and testis.

It is found in the cytoplasm. It localises to the nucleus. Functionally, originally described as a core component of the circadian clock. The circadian clock, an internal time-keeping system, regulates various physiological processes through the generation of approximately 24 hour circadian rhythms in gene expression, which are translated into rhythms in metabolism and behavior. It is derived from the Latin roots 'circa' (about) and 'diem' (day) and acts as an important regulator of a wide array of physiological functions including metabolism, sleep, body temperature, blood pressure, endocrine, immune, cardiovascular, and renal function. Consists of two major components: the central clock, residing in the suprachiasmatic nucleus (SCN) of the brain, and the peripheral clocks that are present in nearly every tissue and organ system. Both the central and peripheral clocks can be reset by environmental cues, also known as Zeitgebers (German for 'timegivers'). The predominant Zeitgeber for the central clock is light, which is sensed by retina and signals directly to the SCN. The central clock entrains the peripheral clocks through neuronal and hormonal signals, body temperature and feeding-related cues, aligning all clocks with the external light/dark cycle. Circadian rhythms allow an organism to achieve temporal homeostasis with its environment at the molecular level by regulating gene expression to create a peak of protein expression once every 24 hours to control when a particular physiological process is most active with respect to the solar day. Transcription and translation of core clock components (CLOCK, NPAS2, BMAL1, BMAL2, PER1, PER2, PER3, CRY1 and CRY2) plays a critical role in rhythm generation, whereas delays imposed by post-translational modifications (PTMs) are important for determining the period (tau) of the rhythms (tau refers to the period of a rhythm and is the length, in time, of one complete cycle). A diurnal rhythm is synchronized with the day/night cycle, while the ultradian and infradian rhythms have a period shorter and longer than 24 hours, respectively. Disruptions in the circadian rhythms contribute to the pathology of cardiovascular diseases, cancer, metabolic syndromes and aging. A transcription/translation feedback loop (TTFL) forms the core of the molecular circadian clock mechanism. Transcription factors, CLOCK or NPAS2 and BMAL1 or BMAL2, form the positive limb of the feedback loop, act in the form of a heterodimer and activate the transcription of core clock genes and clock-controlled genes (involved in key metabolic processes), harboring E-box elements (5'-CACGTG-3') within their promoters. The core clock genes: PER1/2/3 and CRY1/2 which are transcriptional repressors form the negative limb of the feedback loop and interact with the CLOCK|NPAS2-BMAL1|BMAL2 heterodimer inhibiting its activity and thereby negatively regulating their own expression. This heterodimer also activates nuclear receptors NR1D1, NR1D2, RORA, RORB and RORG, which form a second feedback loop and which activate and repress BMAL1 transcription, respectively. Has a redundant role with the other PER proteins PER1 and PER2 and is not essential for the circadian rhythms maintenance. In contrast, plays an important role in sleep-wake timing and sleep homeostasis probably through the transcriptional regulation of sleep homeostasis-related genes, without influencing circadian parameters. Can bind heme. The sequence is that of Period circadian protein homolog 3 (Per3) from Mus musculus (Mouse).